Consider the following 297-residue polypeptide: Bifunctional protein FolD 1 (297 aa).

NADP(+) contacts are provided by residues 164–166 and threonine 230; that span reads GRS.

Belongs to the tetrahydrofolate dehydrogenase/cyclohydrolase family. Homodimer.

It carries out the reaction (6R)-5,10-methylene-5,6,7,8-tetrahydrofolate + NADP(+) = (6R)-5,10-methenyltetrahydrofolate + NADPH. The enzyme catalyses (6R)-5,10-methenyltetrahydrofolate + H2O = (6R)-10-formyltetrahydrofolate + H(+). Its pathway is one-carbon metabolism; tetrahydrofolate interconversion. Its function is as follows. Catalyzes the oxidation of 5,10-methylenetetrahydrofolate to 5,10-methenyltetrahydrofolate and then the hydrolysis of 5,10-methenyltetrahydrofolate to 10-formyltetrahydrofolate. In Rhodococcus jostii (strain RHA1), this protein is Bifunctional protein FolD 1.